A 211-amino-acid chain; its full sequence is Peptide methionine sulfoxide reductase MsrA (211 aa).

The active site involves Cys-52.

Belongs to the MsrA Met sulfoxide reductase family.

The catalysed reaction is L-methionyl-[protein] + [thioredoxin]-disulfide + H2O = L-methionyl-(S)-S-oxide-[protein] + [thioredoxin]-dithiol. It carries out the reaction [thioredoxin]-disulfide + L-methionine + H2O = L-methionine (S)-S-oxide + [thioredoxin]-dithiol. Its function is as follows. Has an important function as a repair enzyme for proteins that have been inactivated by oxidation. Catalyzes the reversible oxidation-reduction of methionine sulfoxide in proteins to methionine. This chain is Peptide methionine sulfoxide reductase MsrA, found in Photobacterium profundum (strain SS9).